Here is a 537-residue protein sequence, read N- to C-terminus: Phosphoenolpyruvate carboxykinase (ATP) (537 aa).

Substrate contacts are provided by arginine 61, tyrosine 195, and lysine 201. Residues lysine 201, histidine 220, and 236-244 (GLSGTGKTT) each bind ATP. The Mn(2+) site is built by lysine 201 and histidine 220. Aspartate 257 is a binding site for Mn(2+). Residues glutamate 285, arginine 323, and threonine 448 each contribute to the ATP site. Arginine 323 lines the substrate pocket.

This sequence belongs to the phosphoenolpyruvate carboxykinase (ATP) family. Mn(2+) serves as cofactor.

The protein localises to the cytoplasm. It carries out the reaction oxaloacetate + ATP = phosphoenolpyruvate + ADP + CO2. It participates in carbohydrate biosynthesis; gluconeogenesis. Functionally, involved in the gluconeogenesis. Catalyzes the conversion of oxaloacetate (OAA) to phosphoenolpyruvate (PEP) through direct phosphoryl transfer between the nucleoside triphosphate and OAA. This is Phosphoenolpyruvate carboxykinase (ATP) from Rhodopseudomonas palustris (strain TIE-1).